An 83-amino-acid chain; its full sequence is Large ribosomal subunit protein eL43 (83 aa).

Zn(2+) is bound by residues Cys38, Cys41, Cys56, and Cys59. The C4-type zinc-finger motif lies at 38 to 59 (CPVCGRRAVRRISTGIWQCKKC).

This sequence belongs to the eukaryotic ribosomal protein eL43 family. Putative zinc-binding subfamily. In terms of assembly, part of the 50S ribosomal subunit. It depends on Zn(2+) as a cofactor.

Its function is as follows. Binds to the 23S rRNA. In Pyrococcus abyssi (strain GE5 / Orsay), this protein is Large ribosomal subunit protein eL43.